A 429-amino-acid chain; its full sequence is Enolase (429 aa).

Q163 contributes to the (2R)-2-phosphoglycerate binding site. Catalysis depends on E205, which acts as the Proton donor. Mg(2+) contacts are provided by D242, E285, and D312. (2R)-2-phosphoglycerate contacts are provided by K337, R366, S367, and K388. K337 serves as the catalytic Proton acceptor.

Belongs to the enolase family. Mg(2+) is required as a cofactor.

It localises to the cytoplasm. The protein resides in the secreted. The protein localises to the cell surface. It catalyses the reaction (2R)-2-phosphoglycerate = phosphoenolpyruvate + H2O. It participates in carbohydrate degradation; glycolysis; pyruvate from D-glyceraldehyde 3-phosphate: step 4/5. In terms of biological role, catalyzes the reversible conversion of 2-phosphoglycerate (2-PG) into phosphoenolpyruvate (PEP). It is essential for the degradation of carbohydrates via glycolysis. This chain is Enolase, found in Methylorubrum extorquens (strain PA1) (Methylobacterium extorquens).